The primary structure comprises 200 residues: Flavin prenyltransferase UbiX (200 aa).

FMN-binding positions include 15-17, Thr41, 102-105, and Arg137; these read GAS and SMGT. Positions 167 and 183 each coordinate dimethylallyl phosphate.

Belongs to the UbiX/PAD1 family.

It carries out the reaction dimethylallyl phosphate + FMNH2 = prenylated FMNH2 + phosphate. Flavin prenyltransferase that catalyzes the synthesis of the prenylated FMN cofactor (prenyl-FMN) for 4-hydroxy-3-polyprenylbenzoic acid decarboxylase UbiD. The prenyltransferase is metal-independent and links a dimethylallyl moiety from dimethylallyl monophosphate (DMAP) to the flavin N5 and C6 atoms of FMN. The polypeptide is Flavin prenyltransferase UbiX (Alkalihalophilus pseudofirmus (strain ATCC BAA-2126 / JCM 17055 / OF4) (Bacillus pseudofirmus)).